We begin with the raw amino-acid sequence, 441 residues long: Tubulin beta-1 chain (441 aa).

8 residues coordinate GTP: glutamine 11, glutamate 69, serine 138, glycine 142, threonine 143, glycine 144, asparagine 204, and asparagine 226. Glutamate 69 is a binding site for Mg(2+).

It belongs to the tubulin family. Dimer of alpha and beta chains. A typical microtubule is a hollow water-filled tube with an outer diameter of 25 nm and an inner diameter of 15 nM. Alpha-beta heterodimers associate head-to-tail to form protofilaments running lengthwise along the microtubule wall with the beta-tubulin subunit facing the microtubule plus end conferring a structural polarity. Microtubules usually have 13 protofilaments but different protofilament numbers can be found in some organisms and specialized cells. It depends on Mg(2+) as a cofactor. In terms of tissue distribution, expressed primarily in touch receptor neurons.

The protein resides in the cytoplasm. The protein localises to the cytoskeleton. TTubulin is the major constituent of microtubules, a cylinder consisting of laterally associated linear protofilaments composed of alpha- and beta-tubulin heterodimers. Microtubules grow by the addition of GTP-tubulin dimers to the microtubule end, where a stabilizing cap forms. Below the cap, tubulin dimers are in GDP-bound state, owing to GTPase activity of alpha-tubulin. Plays a role in mechanosensory transduction (touch sensitivity). Its function is as follows. Mec-7 beta-tubulin is required for the production of 15-protofilament microtubules. The sequence is that of Tubulin beta-1 chain (mec-7) from Caenorhabditis elegans.